The following is a 306-amino-acid chain: D-alanine--D-alanine ligase (306 aa).

Positions 102–300 (KIIAANAGVC…YGDIVQWMVE (199 aa)) constitute an ATP-grasp domain. 128–183 (PMEPPYVIKPVCEGSSFGVVIVQENEAVPPHNIGGSEWGYADEVMVEKYIPGRELT) contributes to the ATP binding site. Mg(2+)-binding residues include Asp-253, Glu-267, and Asn-269.

It belongs to the D-alanine--D-alanine ligase family. Requires Mg(2+) as cofactor. The cofactor is Mn(2+).

It is found in the cytoplasm. It catalyses the reaction 2 D-alanine + ATP = D-alanyl-D-alanine + ADP + phosphate + H(+). The protein operates within cell wall biogenesis; peptidoglycan biosynthesis. Its function is as follows. Cell wall formation. This is D-alanine--D-alanine ligase from Bartonella tribocorum (strain CIP 105476 / IBS 506).